The following is a 117-amino-acid chain: UPF0102 protein RSKD131_0118 (117 aa).

This sequence belongs to the UPF0102 family.

The chain is UPF0102 protein RSKD131_0118 from Cereibacter sphaeroides (strain KD131 / KCTC 12085) (Rhodobacter sphaeroides).